The primary structure comprises 182 residues: MAFPTAEELTALIAPVVATRHLDVEGLRVTKAGPKSTVAIKLDSDSRPDLDLLEVVSQEIGELFDAAEARGELSFGAGYLLEVSTPGVDMPLTQPRHWRRNRTRLVSLDVDGKKRIARIGALNAEETAVILIERNKKALSVTVLELANSPRAVVEIEFAKPAQDELDLAGRTFDEAVEETDH.

This sequence belongs to the RimP family.

It localises to the cytoplasm. In terms of biological role, required for maturation of 30S ribosomal subunits. The chain is Ribosome maturation factor RimP from Corynebacterium efficiens (strain DSM 44549 / YS-314 / AJ 12310 / JCM 11189 / NBRC 100395).